Here is a 157-residue protein sequence, read N- to C-terminus: Endoribonuclease YbeY (157 aa).

Residues histidine 114, histidine 118, and histidine 124 each coordinate Zn(2+).

Belongs to the endoribonuclease YbeY family. The cofactor is Zn(2+).

It is found in the cytoplasm. Functionally, single strand-specific metallo-endoribonuclease involved in late-stage 70S ribosome quality control and in maturation of the 3' terminus of the 16S rRNA. The protein is Endoribonuclease YbeY of Yersinia pestis.